Consider the following 462-residue polypeptide: Acetate--CoA ligase [ADP-forming] I subunit alpha (462 aa).

The protein belongs to the acetate CoA ligase alpha subunit family. As to quaternary structure, heterotetramer of two alpha and two beta subunits.

Its subcellular location is the cytoplasm. The catalysed reaction is acetate + ATP + CoA = acetyl-CoA + ADP + phosphate. With respect to regulation, activity is dependent on magnesium. Functionally, catalyzes the reversible formation of acetate and ATP from acetyl-CoA by using ADP and phosphate. Can use other substrates such as isobutyryl-CoA, propionyl-CoA and butyryl-CoA, but not indoleacetyl-CoA, phenylacetyl-CoA or succinyl-CoA. Seems to be involved primarily in the conversion of acetyl-CoA to acetate. Participates in the degradation of branched-chain amino acids via branched-chain-acyl-CoA esters. This is Acetate--CoA ligase [ADP-forming] I subunit alpha from Pyrococcus furiosus (strain ATCC 43587 / DSM 3638 / JCM 8422 / Vc1).